Here is a 211-residue protein sequence, read N- to C-terminus: Ribonuclease HII (211 aa).

An RNase H type-2 domain is found at 21-211 (SSIAGLDEAG…APLKSMFDVI (191 aa)). Residues aspartate 27, glutamate 28, and aspartate 122 each coordinate a divalent metal cation.

This sequence belongs to the RNase HII family. Mn(2+) is required as a cofactor. The cofactor is Mg(2+).

It is found in the cytoplasm. It carries out the reaction Endonucleolytic cleavage to 5'-phosphomonoester.. Functionally, endonuclease that specifically degrades the RNA of RNA-DNA hybrids. This Dehalococcoides mccartyi (strain ATCC BAA-2266 / KCTC 15142 / 195) (Dehalococcoides ethenogenes (strain 195)) protein is Ribonuclease HII.